Reading from the N-terminus, the 580-residue chain is TRAF-type zinc finger domain-containing protein 1 (580 aa).

Ala2 is modified (N-acetylalanine). The TRAF-type zinc finger occupies 27–103 (IHEIHCQRNI…DLELSVLKLK (77 aa)). Ser190 is subject to Phosphoserine. Polar residues predominate over residues 197–209 (TTNQRSMTAQFPI). A disordered region spans residues 197–236 (TTNQRSMTAQFPIQNNLLEEQERQERNRSRQTPKERGEDS). Basic and acidic residues predominate over residues 216-235 (EQERQERNRSRQTPKERGED). Residues Ser326, Ser414, and Ser429 each carry the phosphoserine modification. Residues 392 to 580 (PATANNHVSE…GAGDAEEEEE (189 aa)) form a disordered region. A compositionally biased stretch (basic and acidic residues) spans 409–419 (QPRETSPELPK). Positions 453 to 463 (PPNNTTAPPNR) are enriched in low complexity. Ser469 bears the Phosphoserine mark.

As to quaternary structure, interacts with MAVS, TICAM1, TRAF1, TRAF2, TRAF3 and TRAF6.

Its function is as follows. Negative feedback regulator that controls excessive innate immune responses. Regulates both Toll-like receptor 4 (TLR4) and DDX58/RIG1-like helicases (RLH) pathways. May inhibit the LTR pathway by direct interaction with TRAF6 and attenuation of NF-kappa-B activation. May negatively regulate the RLH pathway downstream from MAVS and upstream of NF-kappa-B and IRF3. The chain is TRAF-type zinc finger domain-containing protein 1 (TRAFD1) from Bos taurus (Bovine).